The chain runs to 280 residues: Pantothenate synthetase (280 aa).

30 to 37 (MGYLHEGH) serves as a coordination point for ATP. His-37 acts as the Proton donor in catalysis. Residue Gln-61 participates in (R)-pantoate binding. Gln-61 provides a ligand contact to beta-alanine. ATP is bound at residue 147–150 (GQKD). A (R)-pantoate-binding site is contributed by Gln-153. Residues Val-176 and 184 to 187 (MSSR) each bind ATP.

The protein belongs to the pantothenate synthetase family. Homodimer.

It is found in the cytoplasm. It carries out the reaction (R)-pantoate + beta-alanine + ATP = (R)-pantothenate + AMP + diphosphate + H(+). It participates in cofactor biosynthesis; (R)-pantothenate biosynthesis; (R)-pantothenate from (R)-pantoate and beta-alanine: step 1/1. Its function is as follows. Catalyzes the condensation of pantoate with beta-alanine in an ATP-dependent reaction via a pantoyl-adenylate intermediate. The sequence is that of Pantothenate synthetase from Thermotoga petrophila (strain ATCC BAA-488 / DSM 13995 / JCM 10881 / RKU-1).